The chain runs to 220 residues: MKKEKAVVVFSGGQDSTTCLFWAIEQFAEVEAVTFNYNQRHKLEIDCAAEIAKELGIKHTVLDMSLLNQLAPNALTRTDMEITHEEGELPSTFVDGRNLLFLSFAAVLAKQVGARHIVTGVCETDFSGYPDCRDVFVKSLNVTLNLSMDYPFVIHTPLMWINKAETWKLSDELGAFEFVREKTLTCYNGIIGDGCGECPACQLRKAGLDTYLQEREGANN.

ATP is bound at residue phenylalanine 10–leucine 20. Zn(2+)-binding residues include cysteine 186, cysteine 195, cysteine 198, and cysteine 201.

Belongs to the QueC family. In terms of assembly, homodimer. Zn(2+) serves as cofactor.

It catalyses the reaction 7-carboxy-7-deazaguanine + NH4(+) + ATP = 7-cyano-7-deazaguanine + ADP + phosphate + H2O + H(+). It functions in the pathway purine metabolism; 7-cyano-7-deazaguanine biosynthesis. Its function is as follows. Catalyzes the ATP-dependent conversion of 7-carboxy-7-deazaguanine (CDG) to 7-cyano-7-deazaguanine (preQ(0)). This chain is 7-cyano-7-deazaguanine synthase, found in Bacillus cereus (strain B4264).